A 165-amino-acid chain; its full sequence is NADPH-dependent 7-cyano-7-deazaguanine reductase (165 aa).

The active-site Thioimide intermediate is C56. Catalysis depends on D63, which acts as the Proton donor. Residues 78 to 80 (VES) and 97 to 98 (HE) each bind substrate.

It belongs to the GTP cyclohydrolase I family. QueF type 1 subfamily.

Its subcellular location is the cytoplasm. The enzyme catalyses 7-aminomethyl-7-carbaguanine + 2 NADP(+) = 7-cyano-7-deazaguanine + 2 NADPH + 3 H(+). It functions in the pathway tRNA modification; tRNA-queuosine biosynthesis. Catalyzes the NADPH-dependent reduction of 7-cyano-7-deazaguanine (preQ0) to 7-aminomethyl-7-deazaguanine (preQ1). The sequence is that of NADPH-dependent 7-cyano-7-deazaguanine reductase from Bacillus thuringiensis subsp. konkukian (strain 97-27).